The primary structure comprises 167 residues: Large ribosomal subunit protein uL10 (167 aa).

It belongs to the universal ribosomal protein uL10 family. As to quaternary structure, part of the ribosomal stalk of the 50S ribosomal subunit. The N-terminus interacts with L11 and the large rRNA to form the base of the stalk. The C-terminus forms an elongated spine to which L12 dimers bind in a sequential fashion forming a multimeric L10(L12)X complex.

Functionally, forms part of the ribosomal stalk, playing a central role in the interaction of the ribosome with GTP-bound translation factors. The protein is Large ribosomal subunit protein uL10 of Streptococcus thermophilus (strain CNRZ 1066).